The following is a 177-amino-acid chain: NADH-quinone oxidoreductase subunit B (177 aa).

Residues Cys56, Cys57, Cys121, and Cys151 each coordinate [4Fe-4S] cluster.

It belongs to the complex I 20 kDa subunit family. As to quaternary structure, NDH-1 is composed of 14 different subunits. Subunits NuoB, C, D, E, F, and G constitute the peripheral sector of the complex. [4Fe-4S] cluster is required as a cofactor.

Its subcellular location is the cell inner membrane. The enzyme catalyses a quinone + NADH + 5 H(+)(in) = a quinol + NAD(+) + 4 H(+)(out). NDH-1 shuttles electrons from NADH, via FMN and iron-sulfur (Fe-S) centers, to quinones in the respiratory chain. Couples the redox reaction to proton translocation (for every two electrons transferred, four hydrogen ions are translocated across the cytoplasmic membrane), and thus conserves the redox energy in a proton gradient. This Sphingopyxis alaskensis (strain DSM 13593 / LMG 18877 / RB2256) (Sphingomonas alaskensis) protein is NADH-quinone oxidoreductase subunit B.